A 135-amino-acid chain; its full sequence is Small ribosomal subunit protein uS9 (135 aa).

A compositionally biased stretch (basic and acidic residues) spans 107–118; the sequence is LVGDPRRTEPHK. The tract at residues 107-135 is disordered; the sequence is LVGDPRRTEPHKPNRSTKGPRAKRQKSYR. Residues 119–135 show a composition bias toward basic residues; the sequence is PNRSTKGPRAKRQKSYR.

This sequence belongs to the universal ribosomal protein uS9 family. In terms of assembly, part of the 30S ribosomal subunit.

The chain is Small ribosomal subunit protein uS9 from Pyrococcus furiosus (strain ATCC 43587 / DSM 3638 / JCM 8422 / Vc1).